Reading from the N-terminus, the 512-residue chain is Mesoderm induction early response protein 1 (512 aa).

The segment covering 1–16 (MAEPSVESSSPGGSAT) has biased composition (low complexity). Disordered regions lie at residues 1 to 63 (MAEP…REGD) and 75 to 173 (YGST…EDYI). At serine 10 the chain carries Phosphoserine. A compositionally biased stretch (basic and acidic residues) spans 17 to 36 (SDDHEFDPSADMLVHDFDDE). Acidic residues-rich tracts occupy residues 37 to 46 (RTLEEEEMME) and 83 to 105 (EEDE…DNDD). Residues 129-144 (QSSNDDPSQSVASQDA) show a composition bias toward polar residues. Serine 141 is subject to Phosphoserine. A Phosphotyrosine modification is found at tyrosine 155. A phosphoserine mark is found at serine 160 and serine 166. The span at 160–173 (SEVEEESEEDEDYI) shows a compositional bias: acidic residues. The 99-residue stretch at 180 to 278 (KEIMVGSMFQ…EALRRLRFNV (99 aa)) folds into the ELM2 domain. Residues 180 to 284 (KEIMVGSMFQ…RFNVKAAREE (105 aa)) are interaction with HDAC1. A Glycyl lysine isopeptide (Lys-Gly) (interchain with G-Cter in SUMO2) cross-link involves residue lysine 239. One can recognise an SANT domain in the interval 283–335 (EELSVWTEEECRNFEQGLKAYGKDFHLIQANKVRTRSVGECVAFYYMWKKSER). Residues 366–512 (ESESAASSRA…KFEELENTDD (147 aa)) form a disordered region. 3 positions are modified to phosphoserine: serine 367, serine 369, and serine 377. Polar residues predominate over residues 396–409 (TVSTANQNGVSSNG). Basic and acidic residues predominate over residues 414 to 423 (LNKEEVKVEG). Lysine 420 participates in a covalent cross-link: Glycyl lysine isopeptide (Lys-Gly) (interchain with G-Cter in SUMO2). At threonine 448 the chain carries Phosphothreonine. Positions 462–475 (ARNENDFDEKSERP) are enriched in basic and acidic residues. Residues 482-494 (NSNGKESPGSSEF) show a composition bias toward polar residues. Residues serine 483, serine 488, and serine 491 each carry the phosphoserine modification.

In terms of assembly, interacts with HDAC1. Part of a complex containing at least CDYL, MIER1, MIER2, HDAC1 and HDAC2. Ubiquitously expressed, but at very low levels. However, consistent level of expression are observed in heart, testis, thyroid, ovary and adrenal gland. Transcripts are up-regulated in breast carcinoma cell lines and tumor.

Its subcellular location is the nucleus. It localises to the cytoplasm. Functionally, transcriptional repressor regulating the expression of a number of genes including SP1 target genes. Probably functions through recruitment of HDAC1 a histone deacetylase involved in chromatin silencing. This is Mesoderm induction early response protein 1 (MIER1) from Homo sapiens (Human).